A 70-amino-acid chain; its full sequence is Ribosome modulation factor (70 aa).

The protein belongs to the ribosome modulation factor family.

It is found in the cytoplasm. In terms of biological role, during stationary phase, converts 70S ribosomes to an inactive dimeric form (100S ribosomes). The protein is Ribosome modulation factor of Marinobacter adhaerens (strain DSM 23420 / HP15).